A 588-amino-acid chain; its full sequence is L-fucose isomerase (588 aa).

Active-site proton acceptor residues include Glu-335 and Asp-359. Residues Glu-335, Asp-359, and His-525 each contribute to the Mn(2+) site.

Belongs to the L-fucose isomerase family. The cofactor is Mn(2+).

It localises to the cytoplasm. The enzyme catalyses L-fucose = L-fuculose. The protein operates within carbohydrate degradation; L-fucose degradation; L-lactaldehyde and glycerone phosphate from L-fucose: step 1/3. Converts the aldose L-fucose into the corresponding ketose L-fuculose. The sequence is that of L-fucose isomerase from Streptococcus pneumoniae (strain Hungary19A-6).